A 417-amino-acid polypeptide reads, in one-letter code: Gamma-glutamyl phosphate reductase (417 aa).

It belongs to the gamma-glutamyl phosphate reductase family.

It is found in the cytoplasm. The catalysed reaction is L-glutamate 5-semialdehyde + phosphate + NADP(+) = L-glutamyl 5-phosphate + NADPH + H(+). It functions in the pathway amino-acid biosynthesis; L-proline biosynthesis; L-glutamate 5-semialdehyde from L-glutamate: step 2/2. Its function is as follows. Catalyzes the NADPH-dependent reduction of L-glutamate 5-phosphate into L-glutamate 5-semialdehyde and phosphate. The product spontaneously undergoes cyclization to form 1-pyrroline-5-carboxylate. This Idiomarina loihiensis (strain ATCC BAA-735 / DSM 15497 / L2-TR) protein is Gamma-glutamyl phosphate reductase.